Reading from the N-terminus, the 272-residue chain is Imidazole glycerol phosphate synthase subunit HisF (272 aa).

Active-site residues include aspartate 12 and aspartate 131.

Belongs to the HisA/HisF family. Heterodimer of HisH and HisF.

The protein localises to the cytoplasm. It catalyses the reaction 5-[(5-phospho-1-deoxy-D-ribulos-1-ylimino)methylamino]-1-(5-phospho-beta-D-ribosyl)imidazole-4-carboxamide + L-glutamine = D-erythro-1-(imidazol-4-yl)glycerol 3-phosphate + 5-amino-1-(5-phospho-beta-D-ribosyl)imidazole-4-carboxamide + L-glutamate + H(+). Its pathway is amino-acid biosynthesis; L-histidine biosynthesis; L-histidine from 5-phospho-alpha-D-ribose 1-diphosphate: step 5/9. IGPS catalyzes the conversion of PRFAR and glutamine to IGP, AICAR and glutamate. The HisF subunit catalyzes the cyclization activity that produces IGP and AICAR from PRFAR using the ammonia provided by the HisH subunit. In Methanopyrus kandleri (strain AV19 / DSM 6324 / JCM 9639 / NBRC 100938), this protein is Imidazole glycerol phosphate synthase subunit HisF.